Reading from the N-terminus, the 29-residue chain is Trypsin inhibitor 1 (29 aa).

3 disulfide bridges follow: Cys-3–Cys-20, Cys-10–Cys-22, and Cys-16–Cys-28.

The protein belongs to the protease inhibitor I7 (squash-type serine protease inhibitor) family.

The protein localises to the secreted. In terms of biological role, inhibits trypsin. This chain is Trypsin inhibitor 1, found in Momordica repens.